A 191-amino-acid polypeptide reads, in one-letter code: Probable molybdenum cofactor guanylyltransferase (191 aa).

GTP-binding positions include 6–8, Lys18, Asp67, and Asp92; that span reads LAG. Residue Asp92 participates in Mg(2+) binding.

The protein belongs to the MobA family. The cofactor is Mg(2+).

Its subcellular location is the cytoplasm. The enzyme catalyses Mo-molybdopterin + GTP + H(+) = Mo-molybdopterin guanine dinucleotide + diphosphate. Its function is as follows. Transfers a GMP moiety from GTP to Mo-molybdopterin (Mo-MPT) cofactor (Moco or molybdenum cofactor) to form Mo-molybdopterin guanine dinucleotide (Mo-MGD) cofactor. The protein is Probable molybdenum cofactor guanylyltransferase of Thermococcus gammatolerans (strain DSM 15229 / JCM 11827 / EJ3).